A 282-amino-acid chain; its full sequence is Protein FRG2-like-2 (282 aa).

Over residues 1–10 the composition is skewed to basic and acidic residues; that stretch reads MGKGNEDPDL. 2 disordered regions span residues 1 to 96 and 249 to 282; these read MGKG…QENC and GPGD…LGAP. Polar residues-rich tracts occupy residues 13 to 31, 58 to 68, and 79 to 94; these read SSIQ…SFTE, RQAGSDPNPNK, and GNST…SYQE.

It belongs to the FRG2 family.

Its subcellular location is the nucleus. The protein is Protein FRG2-like-2 (FRG2C) of Homo sapiens (Human).